The following is a 191-amino-acid chain: uncharacterized protein (191 aa).

Residues 6 to 66 (GLTQKMIVDA…ELAVRGLTKL (61 aa)) form the HTH tetR-type domain. A DNA-binding region (H-T-H motif) is located at residues 29–48 (SLAALSKKMNVRPPSLYNHI).

This is an uncharacterized protein from Bacillus subtilis (strain 168).